Reading from the N-terminus, the 384-residue chain is MAFFFNRGRSRQPSDVVRSIKDLLLRLREPSTASKVEDELAKQLSQMKLMVQGTQELEASTDQVHALVQAMLHEDLLYELAVALHNLPFEARKDTQTIFSHILRFKPPHGNSPDPPVISYIVHNRPEIIIELCRGYEHSQSAMPCGTILREALKFDVIAAIILYDQSKEGEPAIRLTEVQPNVPQRGTGVFWRFFHWIDRGTFELSADAFTTFREILTRHKSLVTGYLATNFDYFFAQFNTFLVQSESYVTKRQSIKLLGEILLDRANYSVMMRYVESGENLKLCMKLLRDDRKMVQYEGFHVFKVFVANPDKSVAVQRILINNRDRLLRFLPKFLEDRTDDDQFTDEKSFLVRQIELLPKEPIEPSRSAREPSRSTANTTTVA.

Positions 362–374 (EPIEPSRSAREPS) are enriched in basic and acidic residues. The disordered stretch occupies residues 362 to 384 (EPIEPSRSAREPSRSTANTTTVA).

Belongs to the Mo25 family.

The protein localises to the cytoplasm. Required for conidiophore development. The chain is Conidiophore development protein hymA (hymA) from Emericella nidulans (strain FGSC A4 / ATCC 38163 / CBS 112.46 / NRRL 194 / M139) (Aspergillus nidulans).